A 220-amino-acid polypeptide reads, in one-letter code: Uracil-DNA glycosylase (220 aa).

Aspartate 61 functions as the Proton acceptor in the catalytic mechanism.

It belongs to the uracil-DNA glycosylase (UDG) superfamily. UNG family.

Its subcellular location is the cytoplasm. It catalyses the reaction Hydrolyzes single-stranded DNA or mismatched double-stranded DNA and polynucleotides, releasing free uracil.. Excises uracil residues from the DNA which can arise as a result of misincorporation of dUMP residues by DNA polymerase or due to deamination of cytosine. The chain is Uracil-DNA glycosylase from Glaesserella parasuis serovar 5 (strain SH0165) (Haemophilus parasuis).